The following is a 196-amino-acid chain: Small ribosomal subunit protein uS4C (196 aa).

An S4 RNA-binding domain is found at 87 to 149; sequence CRLDNVVYRI…HRQNEMFSNN (63 aa).

Belongs to the universal ribosomal protein uS4 family. In terms of assembly, part of the 30S ribosomal subunit. Contacts protein S5. The interaction surface between S4 and S5 is involved in control of translational fidelity.

In terms of biological role, one of the primary rRNA binding proteins, it binds directly to 16S rRNA where it nucleates assembly of the body of the 30S subunit. With S5 and S12 plays an important role in translational accuracy. This chain is Small ribosomal subunit protein uS4C (rpsD3), found in Clostridium acetobutylicum (strain ATCC 824 / DSM 792 / JCM 1419 / IAM 19013 / LMG 5710 / NBRC 13948 / NRRL B-527 / VKM B-1787 / 2291 / W).